The chain runs to 152 residues: uncharacterized protein (152 aa).

The Cytoplasmic segment spans residues 1-5 (MWFPQ). A helical membrane pass occupies residues 6–26 (IIAGMAAGGAASAMTPGKVLF). Over 27–38 (TNALGLGCSRSR) the chain is Extracellular. Residues 39 to 59 (GLFLEMFGTAVLCFTVLMTAV) form a helical membrane-spanning segment. Over 60–65 (EKRETN) the chain is Cytoplasmic. A helical membrane pass occupies residues 66-86 (FMAALPIGISLFMAHMALTGY). Over 87-110 (TGTGVNPARSLGAAVAARYFPHYH) the chain is Extracellular. Residues 92–94 (NPA) carry the NPA motif. A helical transmembrane segment spans residues 111–131 (WIYWISPLLGAFLAWSVWQLL). Residues 132–152 (QILDYTTYVNAEKAAGQKKED) are Cytoplasmic-facing.

It belongs to the MIP/aquaporin (TC 1.A.8) family.

It localises to the membrane. This is an uncharacterized protein from Saccharomyces cerevisiae (strain YJM789) (Baker's yeast).